The primary structure comprises 245 residues: DNA repair protein RecO (245 aa).

Belongs to the RecO family.

Involved in DNA repair and RecF pathway recombination. This chain is DNA repair protein RecO, found in Bartonella bacilliformis (strain ATCC 35685 / KC583 / Herrer 020/F12,63).